A 316-amino-acid chain; its full sequence is Phospholipase A1 2 (316 aa).

Positions 1 to 4 are cleaved as a signal peptide; it reads ADDL. Positions 5 to 14 are excised as a propeptide; sequence TTLRNGTLDR. A disulfide bond links Cys20 and Cys103. Residue Ser153 is the Nucleophile of the active site. Asp181 (charge relay system) is an active-site residue. Intrachain disulfides connect Cys192–Cys197 and Cys235–Cys240. His242 functions as the Charge relay system in the catalytic mechanism. 3 disulfides stabilise this stretch: Cys257–Cys284, Cys258–Cys309, and Cys277–Cys282.

The protein belongs to the AB hydrolase superfamily. Lipase family. As to expression, expressed by the venom gland.

Its subcellular location is the secreted. The enzyme catalyses a 1,2-diacyl-sn-glycero-3-phosphocholine + H2O = a 2-acyl-sn-glycero-3-phosphocholine + a fatty acid + H(+). Its function is as follows. Catalyzes the hydrolysis of phosphatidylcholine with phospholipase A1 activity. May act as an allergen and induce hemolytic activity. This Polistes dominula (European paper wasp) protein is Phospholipase A1 2.